The chain runs to 228 residues: MGRLKKLKKIRIHREGTHILWASFLLLLLINAALYWGIDCKIPFYVVAVASIAVYLLMVNFFRCPIRLFGKDTEKIVVAPADGKIVVIEEVDENEYFHDRRLMISIFMSIVNVHANWYPVDGTIKKVAHHNGNFMKAWLPKASTENERSTVVIETPEGVEVLTRQIAGAVARRIVTYAEVGEECYIDEHMGFIKFGSRVDVYLPLGTEVCVNMGQLTTGNQTVIAKLK.

Catalysis depends on Ser197, which acts as the Schiff-base intermediate with substrate; via pyruvic acid. Ser197 is subject to Pyruvic acid (Ser); by autocatalysis.

Belongs to the phosphatidylserine decarboxylase family. PSD-A subfamily. In terms of assembly, heterodimer of a large membrane-associated beta subunit and a small pyruvoyl-containing alpha subunit. Pyruvate is required as a cofactor. In terms of processing, is synthesized initially as an inactive proenzyme. Formation of the active enzyme involves a self-maturation process in which the active site pyruvoyl group is generated from an internal serine residue via an autocatalytic post-translational modification. Two non-identical subunits are generated from the proenzyme in this reaction, and the pyruvate is formed at the N-terminus of the alpha chain, which is derived from the carboxyl end of the proenzyme. The post-translation cleavage follows an unusual pathway, termed non-hydrolytic serinolysis, in which the side chain hydroxyl group of the serine supplies its oxygen atom to form the C-terminus of the beta chain, while the remainder of the serine residue undergoes an oxidative deamination to produce ammonia and the pyruvoyl prosthetic group on the alpha chain.

Its subcellular location is the cell membrane. The enzyme catalyses a 1,2-diacyl-sn-glycero-3-phospho-L-serine + H(+) = a 1,2-diacyl-sn-glycero-3-phosphoethanolamine + CO2. Its pathway is phospholipid metabolism; phosphatidylethanolamine biosynthesis; phosphatidylethanolamine from CDP-diacylglycerol: step 2/2. Its function is as follows. Catalyzes the formation of phosphatidylethanolamine (PtdEtn) from phosphatidylserine (PtdSer). This chain is Phosphatidylserine decarboxylase proenzyme, found in Bacteroides thetaiotaomicron (strain ATCC 29148 / DSM 2079 / JCM 5827 / CCUG 10774 / NCTC 10582 / VPI-5482 / E50).